Reading from the N-terminus, the 339-residue chain is Dihydroorotate dehydrogenase (quinone) (339 aa).

FMN-binding positions include 62-66 and T86; that span reads AGMDK. K66 serves as a coordination point for substrate. 111–115 lines the substrate pocket; it reads NRMGF. The FMN site is built by N139 and N172. Residue N172 participates in substrate binding. The active-site Nucleophile is the S175. N177 is a binding site for substrate. Residues K217 and T245 each coordinate FMN. Substrate is bound at residue 246-247; that stretch reads NT. Residues G268, G297, and 318 to 319 each bind FMN; that span reads YS.

The protein belongs to the dihydroorotate dehydrogenase family. Type 2 subfamily. In terms of assembly, monomer. FMN serves as cofactor.

The protein localises to the cell membrane. It catalyses the reaction (S)-dihydroorotate + a quinone = orotate + a quinol. Its pathway is pyrimidine metabolism; UMP biosynthesis via de novo pathway; orotate from (S)-dihydroorotate (quinone route): step 1/1. Functionally, catalyzes the conversion of dihydroorotate to orotate with quinone as electron acceptor. This Shewanella pealeana (strain ATCC 700345 / ANG-SQ1) protein is Dihydroorotate dehydrogenase (quinone).